Reading from the N-terminus, the 362-residue chain is Protein-glutamate methylesterase/protein-glutamine glutaminase 1 (362 aa).

One can recognise a Response regulatory domain in the interval 10–127; that stretch reads RVLVVDDSSF…ADAQRVFREE (118 aa). Asp-61 is modified (4-aspartylphosphate). The CheB-type methylesterase domain occupies 163 to 357; sequence PRPSQALAGK…LPLTQIGSEI (195 aa). Residues Ser-181, His-208, and Asp-306 contribute to the active site.

Belongs to the CheB family. In terms of processing, phosphorylated by CheA. Phosphorylation of the N-terminal regulatory domain activates the methylesterase activity.

It localises to the cytoplasm. The catalysed reaction is [protein]-L-glutamate 5-O-methyl ester + H2O = L-glutamyl-[protein] + methanol + H(+). The enzyme catalyses L-glutaminyl-[protein] + H2O = L-glutamyl-[protein] + NH4(+). Its function is as follows. Involved in chemotaxis. Part of a chemotaxis signal transduction system that modulates chemotaxis in response to various stimuli. Catalyzes the demethylation of specific methylglutamate residues introduced into the chemoreceptors (methyl-accepting chemotaxis proteins or MCP) by CheR. Also mediates the irreversible deamidation of specific glutamine residues to glutamic acid. The sequence is that of Protein-glutamate methylesterase/protein-glutamine glutaminase 1 from Geobacter sulfurreducens (strain ATCC 51573 / DSM 12127 / PCA).